The sequence spans 309 residues: Aspartate carbamoyltransferase catalytic subunit (309 aa).

Residues Arg48 and Thr49 each contribute to the carbamoyl phosphate site. Residue Lys76 participates in L-aspartate binding. Residues Arg98, His128, and Gln131 each coordinate carbamoyl phosphate. L-aspartate contacts are provided by Arg161 and Arg211. The carbamoyl phosphate site is built by Ala250 and Pro251.

It belongs to the aspartate/ornithine carbamoyltransferase superfamily. ATCase family. Heterododecamer (2C3:3R2) of six catalytic PyrB chains organized as two trimers (C3), and six regulatory PyrI chains organized as three dimers (R2).

The enzyme catalyses carbamoyl phosphate + L-aspartate = N-carbamoyl-L-aspartate + phosphate + H(+). It participates in pyrimidine metabolism; UMP biosynthesis via de novo pathway; (S)-dihydroorotate from bicarbonate: step 2/3. Functionally, catalyzes the condensation of carbamoyl phosphate and aspartate to form carbamoyl aspartate and inorganic phosphate, the committed step in the de novo pyrimidine nucleotide biosynthesis pathway. This chain is Aspartate carbamoyltransferase catalytic subunit, found in Oceanobacillus iheyensis (strain DSM 14371 / CIP 107618 / JCM 11309 / KCTC 3954 / HTE831).